We begin with the raw amino-acid sequence, 243 residues long: Calcium-binding protein LPS1-beta (243 aa).

EF-hand domains follow at residues Glu15–Glu49, Cys47–Glu82, Tyr85–Lys120, Leu121–Leu156, Cys157–Gly189, Tyr191–Asp226, and Asp227–Ile243. Residues Asp29, Asn31, Asp33, Thr35, Glu40, Asp60, Asn62, Asp64, Arg66, Glu71, Asp98, Asp100, Asn102, Arg104, Glu109, Asp134, Asp136, Asp138, His140, Glu145, Asp167, Asn169, Asp171, Ser173, Glu178, Asp204, Asn206, Asp208, Arg210, and Glu215 each coordinate Ca(2+).

In terms of tissue distribution, aboral ectoderm, a squamous epithelium covering the surface of the late stage embryo and larva.

Calcium-binding protein involved in larval development and metamorphosis. Likely to function as calcium buffers mediating the transport of calcium from the sea water to the blastocoel where calcium is required for skeleton formation. This Lytechinus pictus (Painted sea urchin) protein is Calcium-binding protein LPS1-beta.